We begin with the raw amino-acid sequence, 1523 residues long: Slit homolog 3 protein (1523 aa).

Positions 1–33 are cleaved as a signal peptide; sequence MAPGRTGAGAAVRARLALALALASILSGPPAAA. An LRRNT domain is found at 34-61; the sequence is CPTKCTCSAASVDCHGLGLRAVPRGIPR. LRR repeat units follow at residues 62–83, 86–107, 110–131, 134–155, 158–179, and 182–203; these read NAER…DFTG, NLRV…AFQD, QLER…LFQS, KLTR…AFRG, GVKN…AFRA, and DLEI…SFNH. An N-linked (GlcNAc...) asparagine glycan is attached at asparagine 72. N-linked (GlcNAc...) asparagine glycosylation occurs at asparagine 192. An LRRCT 1 domain is found at 215 to 265; sequence NHLYCDCHLAWLSDWLRQRRTIGQFTLCMAPVHLRGFSVADVQKKEYVCPG. Residues 271 to 307 enclose the LRRNT 2 domain; it reads PACNANSLSCPSACSCSNNIVDCRGKGLTEIPANLPE. A disulfide bond links cysteine 284 and cysteine 293. LRR repeat units follow at residues 308–329, 332–353, 356–377, 380–401, and 404–425; these read GIVE…AFIQ, KLKR…AFQG, SLTS…LFDG, SLQL…TFQD, and NLNL…LFAP. The LRRCT 2 domain occupies 437 to 487; sequence NPFVCDCHLKWLADYLQDNPIETSGARCSSPRRLANKRISQIKSKKFRCSG. 4 cysteine pairs are disulfide-bonded: cysteine 441–cysteine 464, cysteine 443–cysteine 485, cysteine 505–cysteine 511, and cysteine 509–cysteine 518. The LRRNT 3 domain maps to 496–532; it reads SSECFMDLVCPEKCRCEGTIVDCSNQKLSRIPSHLPE. 5 LRR repeats span residues 533–554, 558–579, 582–603, 606–627, and 630–651; these read YTTD…GIFK, NLRK…AFDG, GVQE…MFRG, GLKT…TFAG, and SVRL…AFTT. N-linked (GlcNAc...) asparagine glycosylation is present at asparagine 563. Asparagine 622 is a glycosylation site (N-linked (GlcNAc...) asparagine). Residues 663–713 form the LRRCT 3 domain; it reads NPFNCNCHMAWLGRWLRKRRIVSGNPRCQKPFFLKEIPIQDVAIQDFTCEG. 2 disulfides stabilise this stretch: cysteine 667-cysteine 690 and cysteine 669-cysteine 711. Residues 716 to 752 form the LRRNT 4 domain; it reads ENSCQLSPRCPEQCTCVETVVRCSNRGLHTLPKGMPK. LRR repeat units follow at residues 753–774, 776–797, 800–821, and 824–845; these read DVTE…LSTF, QLTL…TFSN, HLST…AFNG, and SLRV…SFND. Asparagine 784, asparagine 792, and asparagine 797 each carry an N-linked (GlcNAc...) asparagine glycan. An LRRCT 4 domain is found at 857-907; it reads NPLHCDCSLRWLSEWIKAGYKEPGIARCSSPESMADRLLLTTPTHRFQCKG. 6 EGF-like domains span residues 918–953, 955–994, 996–1032, 1034–1072, 1074–1110, and 1119–1155; these read NACL…KDCT, PINT…QRCE, NPDD…ELCD, VIDY…KLCE, DNDD…LFCE, and QTSP…PRCE. 18 cysteine pairs are disulfide-bonded: cysteine 920/cysteine 931, cysteine 925/cysteine 941, cysteine 943/cysteine 952, cysteine 959/cysteine 970, cysteine 964/cysteine 982, cysteine 984/cysteine 993, cysteine 1000/cysteine 1011, cysteine 1005/cysteine 1020, cysteine 1022/cysteine 1031, cysteine 1038/cysteine 1051, cysteine 1045/cysteine 1060, cysteine 1062/cysteine 1071, cysteine 1078/cysteine 1089, cysteine 1083/cysteine 1098, cysteine 1100/cysteine 1109, cysteine 1123/cysteine 1134, cysteine 1128/cysteine 1143, and cysteine 1145/cysteine 1154. Residue asparagine 928 is glycosylated (N-linked (GlcNAc...) asparagine). A glycan (N-linked (GlcNAc...) asparagine) is linked at asparagine 1025. The Laminin G-like domain maps to 1158-1332; the sequence is ITVNFVGKDS…PQSLGVSPGC (175 aa). Asparagine 1181 and asparagine 1247 each carry an N-linked (GlcNAc...) asparagine glycan. Disulfide bonds link cysteine 1305–cysteine 1332, cysteine 1355–cysteine 1364, cysteine 1372–cysteine 1382, cysteine 1377–cysteine 1391, and cysteine 1393–cysteine 1402. EGF-like domains lie at 1340–1365 and 1368–1403; these read HGLC…PLCD and AQDP…PLCD. Asparagine 1406 carries N-linked (GlcNAc...) asparagine glycosylation. In terms of domain architecture, EGF-like 9 spans 1408-1444; the sequence is SANACSAFKCHHGQCHISDRGEPYCLCQPGFSGNHCE. 7 cysteine pairs are disulfide-bonded: cysteine 1412-cysteine 1422, cysteine 1417-cysteine 1432, cysteine 1434-cysteine 1443, cysteine 1449-cysteine 1487, cysteine 1467-cysteine 1501, cysteine 1478-cysteine 1517, and cysteine 1482-cysteine 1519. One can recognise a CTCK domain in the interval 1449-1523; it reads CLGEIVREAI…HLECGCRECS (75 aa).

It localises to the secreted. May act as molecular guidance cue in cellular migration, and function may be mediated by interaction with roundabout homolog receptors. The protein is Slit homolog 3 protein (Slit3) of Rattus norvegicus (Rat).